A 371-amino-acid chain; its full sequence is Cytochrome b (371 aa).

4 helical membrane-spanning segments follow: residues 25-45, 69-90, 105-125, and 170-190; these read FGSM…FLAV, WMMQ…YIHI, WMSG…GYVL, and FFAL…LHII. H75 and H89 together coordinate heme b. Residues H174 and H188 each coordinate heme b. H193 contributes to the a ubiquinone binding site. 4 helical membrane-spanning segments follow: residues 218-238, 280-300, 312-332, and 339-358; these read YKDL…VSFF, LGGA…PFTH, LSQL…WAAT, and YIII…ISMP.

The protein belongs to the cytochrome b family. The cytochrome bc1 complex contains 3 respiratory subunits (MT-CYB, CYC1 and UQCRFS1), 2 core proteins (UQCRC1 and UQCRC2) and probably 6 low-molecular weight proteins. Heme b is required as a cofactor.

It is found in the mitochondrion inner membrane. Component of the ubiquinol-cytochrome c reductase complex (complex III or cytochrome b-c1 complex) that is part of the mitochondrial respiratory chain. The b-c1 complex mediates electron transfer from ubiquinol to cytochrome c. Contributes to the generation of a proton gradient across the mitochondrial membrane that is then used for ATP synthesis. The sequence is that of Cytochrome b (MT-CYB) from Python molurus (Indian python).